Reading from the N-terminus, the 363-residue chain is S-adenosylmethionine decarboxylase proenzyme (363 aa).

Residues glutamate 9 and glutamate 12 contribute to the active site. The active-site Schiff-base intermediate with substrate; via pyruvic acid is serine 69. Serine 69 is modified (pyruvic acid (Ser); by autocatalysis). The active-site Proton donor; for catalytic activity is cysteine 83. Residues serine 232 and histidine 245 each act as proton acceptor; for processing activity in the active site.

Belongs to the eukaryotic AdoMetDC family. Pyruvate is required as a cofactor. Post-translationally, is synthesized initially as an inactive proenzyme. Formation of the active enzyme involves a self-maturation process in which the active site pyruvoyl group is generated from an internal serine residue via an autocatalytic post-translational modification. Two non-identical subunits are generated from the proenzyme in this reaction, and the pyruvate is formed at the N-terminus of the alpha chain, which is derived from the carboxyl end of the proenzyme. The post-translation cleavage follows an unusual pathway, termed non-hydrolytic serinolysis, in which the side chain hydroxyl group of the serine supplies its oxygen atom to form the C-terminus of the beta chain, while the remainder of the serine residue undergoes an oxidative deamination to produce ammonia and the pyruvoyl group blocking the N-terminus of the alpha chain.

It carries out the reaction S-adenosyl-L-methionine + H(+) = S-adenosyl 3-(methylsulfanyl)propylamine + CO2. Its pathway is amine and polyamine biosynthesis; S-adenosylmethioninamine biosynthesis; S-adenosylmethioninamine from S-adenosyl-L-methionine: step 1/1. In Spinacia oleracea (Spinach), this protein is S-adenosylmethionine decarboxylase proenzyme (SAMDC).